The chain runs to 147 residues: Helix-loop-helix protein 13 (147 aa).

Residues 41–93 (EERQTASIRERKRMCSINVAFIELRNYIPTFPYEKRLSKIDTLNLAIAYINML) enclose the bHLH domain.

Expressed in hermaphrodite dopaminergic neurons (ADE, CEP, and PDE).

Its subcellular location is the nucleus. It localises to the cytoplasm. Functionally, transcriptional activator. Shown to have a role in the negative regulation of exit from L1 arrest and dauer diapause dependent on IIS signaling (insulin and insulin-like growth factor (IGF) signaling). Hypodermal expression is regulated by IIS/daf-16 while neuronal expression is not under the control of IIS/daf-16. This chain is Helix-loop-helix protein 13, found in Caenorhabditis elegans.